The primary structure comprises 153 residues: MSDVQERLKKLGLGARTGTGKGTPRRKVKRAPARSGADDKKLQLALKKLNTQPIQAIEEVNMFKQDGNVIHFAAPKVHAAVPSNTFAIYGNGEDKELTELVPGILNQLGPDSLASLRKLAESYQNLQKEKGEDDDEIPDLVEGENFEGEPKVE.

2 disordered regions span residues 1–40 and 126–153; these read MSDVQERLKKLGLGARTGTGKGTPRRKVKRAPARSGADDK and LQKEKGEDDDEIPDLVEGENFEGEPKVE. The span at 23–32 shows a compositional bias: basic residues; the sequence is TPRRKVKRAP. The NAC-A/B domain maps to 36–101; sequence GADDKKLQLA…GEDKELTELV (66 aa). Residues 132 to 147 show a composition bias toward acidic residues; the sequence is EDDDEIPDLVEGENFE.

This sequence belongs to the NAC-beta family. In terms of assembly, part of the nascent polypeptide-associated complex (NAC), consisting of EGD2 and EGD1. NAC associates with ribosomes via EGD1.

It is found in the cytoplasm. The protein localises to the nucleus. Component of the nascent polypeptide-associated complex (NAC), a dynamic component of the ribosomal exit tunnel, protecting the emerging polypeptides from interaction with other cytoplasmic proteins to ensure appropriate nascent protein targeting. The NAC complex also promotes mitochondrial protein import by enhancing productive ribosome interactions with the outer mitochondrial membrane and blocks the inappropriate interaction of ribosomes translating non-secretory nascent polypeptides with translocation sites in the membrane of the endoplasmic reticulum. EGD1 may act as a transcription factor that exert a negative effect on the expression of several genes that are transcribed by RNA polymerase II. The sequence is that of Nascent polypeptide-associated complex subunit beta (EGD1) from Gibberella zeae (strain ATCC MYA-4620 / CBS 123657 / FGSC 9075 / NRRL 31084 / PH-1) (Wheat head blight fungus).